The sequence spans 550 residues: Beta-cubebene synthase (550 aa).

Asp-303, Asp-307, Asp-447, and Glu-455 together coordinate Mg(2+). The DDXXD motif motif lies at 303–307 (DDTYD).

Belongs to the terpene synthase family. Tpsa subfamily. Mg(2+) serves as cofactor. Expressed in young developing leaves and in stamens. Not detected in tepals and carpels.

It catalyses the reaction (2E,6E)-farnesyl diphosphate = beta-cubebene + diphosphate. Its pathway is secondary metabolite biosynthesis; terpenoid biosynthesis. Functionally, sesquiterpene synthase converting farnesyl diphosphate into beta-cubebene (24.5%), alpha-muurolene (19.3%), delta-cadinol (18.6%), delta-elemene (16.0%), tau-muurolene (10.8%), and beta-elemene (10.8%). No activity with geranyl diphosphate or geranylgeranyl diphosphate. This chain is Beta-cubebene synthase, found in Magnolia grandiflora (Southern magnolia).